Here is a 373-residue protein sequence, read N- to C-terminus: MSVPAFIDISEEDQAAELRAYLKSKGAEISEENSEGGLHVDLAQIIEACDVCLKEDDKDVESVMNSVVSLLLILEPDKQEALIESLCEKLVKFREGERPSLRLQLLSNLFHGMDKNTPVRYTVYCSLIKVAASCGAIQYIPTELDQVRKWISDWNLTTEKKHTLLRLLYEALVDCKKSDAASKVMVELLGSYTEDNASQARVDAHRCIVRALKDPNAFLFDHLLTLKPVKFLEGELIHDLLTIFVSAKLAYVKFYQNNKDFIDSLGLLHEQNMAKMRLLTFMGMAVENKEISFDTMQQELQIGADDVEAFVIDAVRTKMVYCKIDQTQRKVVVSHSTHRTFGKQQWQQLYDTLNAWKQNLNKVKNSLLSLSDT.

Residue S2 is modified to N-acetylserine. Phosphoserine is present on residues S2 and S152. Residues 180 to 338 form the PCI domain; it reads AASKVMVELL…RKVVVSHSTH (159 aa). At K253 the chain carries N6-acetyllysine. S366 bears the Phosphoserine mark.

It belongs to the eIF-3 subunit M family. As to quaternary structure, component of the eukaryotic translation initiation factor 3 (eIF-3) complex, which is composed of 13 subunits: EIF3A, EIF3B, EIF3C, EIF3D, EIF3E, EIF3F, EIF3G, EIF3H, EIF3I, EIF3J, EIF3K, EIF3L and EIF3M. The eIF-3 complex appears to include 3 stable modules: module A is composed of EIF3A, EIF3B, EIF3G and EIF3I; module B is composed of EIF3F, EIF3H, and EIF3M; and module C is composed of EIF3C, EIF3D, EIF3E, EIF3K and EIF3L. EIF3C of module C binds EIF3B of module A and EIF3H of module B, thereby linking the three modules. EIF3J is a labile subunit that binds to the eIF-3 complex via EIF3B. The eIF-3 complex interacts with RPS6KB1 under conditions of nutrient depletion. Mitogenic stimulation leads to binding and activation of a complex composed of MTOR and RPTOR, leading to phosphorylation and release of RPS6KB1 and binding of EIF4B to eIF-3.

The protein resides in the cytoplasm. In terms of biological role, component of the eukaryotic translation initiation factor 3 (eIF-3) complex, which is required for several steps in the initiation of protein synthesis. The eIF-3 complex associates with the 40S ribosome and facilitates the recruitment of eIF-1, eIF-1A, eIF-2:GTP:methionyl-tRNAi and eIF-5 to form the 43S pre-initiation complex (43S PIC). The eIF-3 complex stimulates mRNA recruitment to the 43S PIC and scanning of the mRNA for AUG recognition. The eIF-3 complex is also required for disassembly and recycling of post-termination ribosomal complexes and subsequently prevents premature joining of the 40S and 60S ribosomal subunits prior to initiation. The eIF-3 complex specifically targets and initiates translation of a subset of mRNAs involved in cell proliferation, including cell cycling, differentiation and apoptosis, and uses different modes of RNA stem-loop binding to exert either translational activation or repression. The protein is Eukaryotic translation initiation factor 3 subunit M of Bos taurus (Bovine).